We begin with the raw amino-acid sequence, 1388 residues long: DNA-directed RNA polymerase subunit beta (1388 aa).

The protein belongs to the RNA polymerase beta chain family. In terms of assembly, the RNAP catalytic core consists of 2 alpha, 1 beta, 1 beta' and 1 omega subunit. When a sigma factor is associated with the core the holoenzyme is formed, which can initiate transcription.

It carries out the reaction RNA(n) + a ribonucleoside 5'-triphosphate = RNA(n+1) + diphosphate. Functionally, DNA-dependent RNA polymerase catalyzes the transcription of DNA into RNA using the four ribonucleoside triphosphates as substrates. In Stenotrophomonas maltophilia (strain K279a), this protein is DNA-directed RNA polymerase subunit beta.